The following is a 929-amino-acid chain: Isoleucine--tRNA ligase (929 aa).

Residues 58–68 carry the 'HIGH' region motif; it reads PYANGDIHIGH. Glu563 contributes to the L-isoleucyl-5'-AMP binding site. Positions 605-609 match the 'KMSKS' region motif; it reads KMSKS. An ATP-binding site is contributed by Lys608. 4 residues coordinate Zn(2+): Cys892, Cys895, Cys912, and Cys915.

The protein belongs to the class-I aminoacyl-tRNA synthetase family. IleS type 1 subfamily. In terms of assembly, monomer. The cofactor is Zn(2+).

Its subcellular location is the cytoplasm. It catalyses the reaction tRNA(Ile) + L-isoleucine + ATP = L-isoleucyl-tRNA(Ile) + AMP + diphosphate. Its function is as follows. Catalyzes the attachment of isoleucine to tRNA(Ile). As IleRS can inadvertently accommodate and process structurally similar amino acids such as valine, to avoid such errors it has two additional distinct tRNA(Ile)-dependent editing activities. One activity is designated as 'pretransfer' editing and involves the hydrolysis of activated Val-AMP. The other activity is designated 'posttransfer' editing and involves deacylation of mischarged Val-tRNA(Ile). The sequence is that of Isoleucine--tRNA ligase from Neisseria gonorrhoeae (strain NCCP11945).